Reading from the N-terminus, the 399-residue chain is Myb-related transcription factor, partner of profilin (399 aa).

The Myb-like domain maps to 12–84 (TTRLRKPRFS…EVQKRWNDFK (73 aa)). The Nuclear localization signal motif lies at 83–86 (FKRR). Disordered regions lie at residues 87 to 108 (TKEK…AEDA), 127 to 261 (PGAG…PSLD), 297 to 332 (LLPG…PKVE), and 358 to 399 (APRS…WKSP). Low complexity predominate over residues 127–136 (PGAGAGAEEP). The span at 137–149 (PAAPSSQPPPPSA) shows a compositional bias: pro residues. Residues 156–170 (LSEDRREDRRADTSA) show a composition bias toward basic and acidic residues. 3 stretches are compositionally biased toward pro residues: residues 219–252 (SPPP…PPPT), 305–329 (SLPP…PPAP), and 366–377 (PRPPPAPLPPHD). The span at 381-399 (HKRRKGFPTRKRRGRWKSP) shows a compositional bias: basic residues. Short sequence motifs (nuclear localization signal) lie at residues 382–385 (KRRK) and 390–393 (RKRR).

As to quaternary structure, interacts with PFN1. Homodimer and heterodimer with PFN1.

The protein localises to the nucleus. In terms of biological role, transcriptional repressor; DNA-binding protein that specifically recognizes the core sequence 5'-YAAC[GT]G-3'. Dimerization with PFN1 reduces its DNA-binding capacity. This is Myb-related transcription factor, partner of profilin (MYPOP) from Homo sapiens (Human).